The sequence spans 128 residues: Large ribosomal subunit protein bL12 (128 aa).

Belongs to the bacterial ribosomal protein bL12 family. In terms of assembly, homodimer. Part of the ribosomal stalk of the 50S ribosomal subunit. Forms a multimeric L10(L12)X complex, where L10 forms an elongated spine to which 2 to 4 L12 dimers bind in a sequential fashion. Binds GTP-bound translation factors.

In terms of biological role, forms part of the ribosomal stalk which helps the ribosome interact with GTP-bound translation factors. Is thus essential for accurate translation. This Synechocystis sp. (strain ATCC 27184 / PCC 6803 / Kazusa) protein is Large ribosomal subunit protein bL12.